Here is a 44-residue protein sequence, read N- to C-terminus: uncharacterized protein (44 aa).

A helical membrane pass occupies residues 6-26 (SILIRGGGGVLIVLILLLWIV).

Its subcellular location is the membrane. This is an uncharacterized protein from Ornithodoros (relapsing fever ticks).